Here is a 198-residue protein sequence, read N- to C-terminus: Patulin synthesis protein F (198 aa).

The first 18 residues, 1-18, serve as a signal peptide directing secretion; it reads MRLSTVLLGSLLGALTQA. Residues asparagine 128 and asparagine 184 are each glycosylated (N-linked (GlcNAc...) asparagine).

This sequence belongs to the patF family.

The protein localises to the cytoplasm. The protein resides in the cytosol. The catalysed reaction is phyllostine = neopatulin. Its pathway is mycotoxin biosynthesis; patulin biosynthesis. In terms of biological role, part of the gene cluster that mediates the biosynthesis of patulin, an acetate-derived tetraketide mycotoxin produced by several fungal species that shows antimicrobial properties against several bacteria. PatF catalyzes the conversion of phyllostine into neopatulin. The pathway begins with the synthesis of 6-methylsalicylic acid by the polyketide synthase (PKS) patK via condensation of acetate and malonate units. The 6-methylsalicylic acid decarboxylase patG then catalyzes the decarboxylation of 6-methylsalicylic acid to yield m-cresol (also known as 3-methylphenol). These first reactions occur in the cytosol. The intermediate m-cresol is then transported into the endoplasmic reticulum where the cytochrome P450 monooxygenase patH converts it to m-hydroxybenzyl alcohol, which is further converted to gentisyl alcohol by the cytochrome P450 monooxygenase patI. The oxidoreductases patJ and patO further convert gentisyl alcohol to isoepoxydon in the vacuole. PatN catalyzes then the transformation of isoepoxydon into phyllostine. The cluster protein patF is responsible for the conversion from phyllostine to neopatulin whereas the alcohol dehydrogenase patD converts neopatulin to E-ascladiol. The steps between isoepoxydon and E-ascladiol occur in the cytosol, and E-ascladiol is probably secreted to the extracellular space by one of the cluster-specific transporters patC or patM. Finally, the secreted patulin synthase patE catalyzes the conversion of E-ascladiol to patulin. In Aspergillus clavatus (strain ATCC 1007 / CBS 513.65 / DSM 816 / NCTC 3887 / NRRL 1 / QM 1276 / 107), this protein is Patulin synthesis protein F.